Consider the following 700-residue polypeptide: Glycine--tRNA ligase beta subunit (700 aa).

It belongs to the class-II aminoacyl-tRNA synthetase family. As to quaternary structure, tetramer of two alpha and two beta subunits.

It is found in the cytoplasm. It carries out the reaction tRNA(Gly) + glycine + ATP = glycyl-tRNA(Gly) + AMP + diphosphate. The protein is Glycine--tRNA ligase beta subunit of Helicobacter pylori (strain Shi470).